The sequence spans 137 residues: Large ribosomal subunit protein uL16 (137 aa).

It belongs to the universal ribosomal protein uL16 family. Part of the 50S ribosomal subunit.

In terms of biological role, binds 23S rRNA and is also seen to make contacts with the A and possibly P site tRNAs. This Leptospira biflexa serovar Patoc (strain Patoc 1 / Ames) protein is Large ribosomal subunit protein uL16.